A 159-amino-acid chain; its full sequence is Ribosomal RNA large subunit methyltransferase H (159 aa).

S-adenosyl-L-methionine is bound by residues Leu-76, Gly-108, and 127 to 132; that span reads FGLLTL.

The protein belongs to the RNA methyltransferase RlmH family. Homodimer.

The protein localises to the cytoplasm. The catalysed reaction is pseudouridine(1915) in 23S rRNA + S-adenosyl-L-methionine = N(3)-methylpseudouridine(1915) in 23S rRNA + S-adenosyl-L-homocysteine + H(+). Its function is as follows. Specifically methylates the pseudouridine at position 1915 (m3Psi1915) in 23S rRNA. This is Ribosomal RNA large subunit methyltransferase H from Streptococcus pyogenes serotype M18 (strain MGAS8232).